A 1221-amino-acid chain; its full sequence is DNA-directed RNA polymerase subunit beta' (1221 aa).

Zn(2+) contacts are provided by Cys60, Cys62, Cys75, and Cys78. Asp449, Asp451, and Asp453 together coordinate Mg(2+). Zn(2+) is bound by residues Cys821, Cys896, Cys903, and Cys906.

It belongs to the RNA polymerase beta' chain family. As to quaternary structure, the RNAP catalytic core consists of 2 alpha, 1 beta, 1 beta' and 1 omega subunit. When a sigma factor is associated with the core the holoenzyme is formed, which can initiate transcription. Mg(2+) is required as a cofactor. Zn(2+) serves as cofactor.

The catalysed reaction is RNA(n) + a ribonucleoside 5'-triphosphate = RNA(n+1) + diphosphate. In terms of biological role, DNA-dependent RNA polymerase catalyzes the transcription of DNA into RNA using the four ribonucleoside triphosphates as substrates. This chain is DNA-directed RNA polymerase subunit beta', found in Lactobacillus delbrueckii subsp. bulgaricus (strain ATCC BAA-365 / Lb-18).